Here is a 177-residue protein sequence, read N- to C-terminus: R-phycoerythrin beta chain (177 aa).

(2R,3E)-phycoerythrobilin contacts are provided by N35 and D39. Positions 50, 54, and 61 each coordinate phycourobilin. (2R,3E)-phycoerythrobilin is bound by residues N72, 77 to 78 (RR), C82, and 84 to 85 (RD). N72 bears the N4-methylasparagine mark. A phycourobilin-binding site is contributed by 147–148 (SG). C158 contributes to the (2R,3E)-phycoerythrobilin binding site.

The protein belongs to the phycobiliprotein family. As to quaternary structure, heterododecamer of 6 alpha and 6 beta chains. The basic functional unit of phycobiliproteins is a ring-shaped hexamer formed from two back-to-back trimers contacting via the alpha chain subunits. The trimers are composed of alpha/beta subunit heterodimers arranged around a three-fold axis of symmetry. The phycoerythrins also contain a gamma subunit which is located in the center of the hexamer. Post-translationally, contains two covalently linked phycoerythrobilin chromophores and one covalently linked phycourobilin chromophore.

The protein resides in the plastid. It localises to the chloroplast thylakoid membrane. Functionally, light-harvesting photosynthetic tetrapyrrole chromophore-protein from the phycobiliprotein complex. The protein is R-phycoerythrin beta chain (cpeB) of Griffithsia monilis (Red alga).